We begin with the raw amino-acid sequence, 396 residues long: Obg-like ATPase 1 (396 aa).

Positions 23-283 (LKIGIVGLPN…LSAEERQKYL (261 aa)) constitute an OBG-type G domain. ATP is bound at residue 32–37 (NVGKST). 2 residues coordinate Mg(2+): Ser36 and Thr56. Leu231 is an ATP binding site. A Nuclear export signal motif is present at residues 267 to 274 (LELRLQEL). Lys294 carries the N6-acetyllysine modification. The region spanning 304 to 387 (QLEYFFTAGP…EDGDIIFFKF (84 aa)) is the TGS domain.

This sequence belongs to the TRAFAC class OBG-HflX-like GTPase superfamily. OBG GTPase family. YchF/OLA1 subfamily. Monomer. Mg(2+) serves as cofactor.

It localises to the cytoplasm. It is found in the nucleus. The protein resides in the nucleolus. Hydrolyzes ATP, and can also hydrolyze GTP with lower efficiency. Has lower affinity for GTP. This is Obg-like ATPase 1 from Bos taurus (Bovine).